Reading from the N-terminus, the 534-residue chain is Lariat debranching enzyme (534 aa).

A divalent metal cation is bound by residues Cys-8, His-10, Asp-39, and Asn-84. Positions Ser-124 to Arg-154 are lariat recognition loop. Residues His-174, His-226, and His-228 each coordinate a divalent metal cation. Disordered regions lie at residues Lys-242–Ser-275 and Thr-501–Asp-534.

The protein belongs to the lariat debranching enzyme family. Fe(2+) serves as cofactor. Requires Zn(2+) as cofactor. The cofactor is Mn(2+).

The protein resides in the nucleus. Active in presence of diverse metals including Fe(2+), Zn(2+), Mn(2+). Binds two metal cations in two adjacent alpha and beta metal-binding pockets. Its function is as follows. Cleaves the 2'-5' phosphodiester linkage at the branch point of lariat intron pre-mRNAs after splicing and converts them into linear molecules that are subsequently degraded. It thereby facilitates ribonucleotide turnover. The sequence is that of Lariat debranching enzyme (ldbr) from Drosophila melanogaster (Fruit fly).